We begin with the raw amino-acid sequence, 125 residues long: MAGAGPTMLLREENGCCSRRQSSSSAGDSDGEQEDSPATRARQQLEALLNKTMRIRMTDGRTLVGCFLCTDRDCNVILGSAQEFLKPSDSFSAGEPRVLGLAMVPGHHIVSIEVQRESLSGGPYL.

A disordered region spans residues 1-42 (MAGAGPTMLLREENGCCSRRQSSSSAGDSDGEQEDSPATRAR). The residue at position 2 (Ala2) is an N-acetylalanine. Positions 18-28 (SRRQSSSSAGD) are enriched in low complexity. 3 positions are modified to phosphoserine: Ser22, Ser25, and Ser29. The Sm domain maps to 40–118 (RARQQLEALL…IVSIEVQRES (79 aa)).

It belongs to the snRNP Sm proteins family. In terms of assembly, component of the N-terminal acetyltransferase C (NatC) complex, which is composed of NAA35, NAA38 and NAA30.

Its subcellular location is the cytoplasm. It is found in the nucleus. Functionally, auxillary component of the N-terminal acetyltransferase C (NatC) complex which catalyzes acetylation of N-terminal methionine residues. N-terminal acetylation protects proteins from ubiquitination and degradation by the N-end rule pathway. The protein is N-alpha-acetyltransferase 38, NatC auxiliary subunit (Naa38) of Mus musculus (Mouse).